Reading from the N-terminus, the 263-residue chain is Endonuclease 8 (263 aa).

The active-site Schiff-base intermediate with DNA is the Pro2. Glu3 (proton donor) is an active-site residue. The active-site Proton donor; for beta-elimination activity is Lys53. Residues Gln70, Arg125, and Asn169 each coordinate DNA. An FPG-type zinc finger spans residues 229–263 (KVFHRDGERCERCGGIIEKTTLSSRPFYWCPGCQH). Residue Arg253 is the Proton donor; for delta-elimination activity of the active site.

This sequence belongs to the FPG family. Zn(2+) serves as cofactor.

The catalysed reaction is 2'-deoxyribonucleotide-(2'-deoxyribose 5'-phosphate)-2'-deoxyribonucleotide-DNA = a 3'-end 2'-deoxyribonucleotide-(2,3-dehydro-2,3-deoxyribose 5'-phosphate)-DNA + a 5'-end 5'-phospho-2'-deoxyribonucleoside-DNA + H(+). Involved in base excision repair of DNA damaged by oxidation or by mutagenic agents. Acts as a DNA glycosylase that recognizes and removes damaged bases. Has a preference for oxidized pyrimidines, such as thymine glycol, 5,6-dihydrouracil and 5,6-dihydrothymine. Has AP (apurinic/apyrimidinic) lyase activity and introduces nicks in the DNA strand. Cleaves the DNA backbone by beta-delta elimination to generate a single-strand break at the site of the removed base with both 3'- and 5'-phosphates. The chain is Endonuclease 8 from Klebsiella pneumoniae subsp. pneumoniae (strain ATCC 700721 / MGH 78578).